We begin with the raw amino-acid sequence, 779 residues long: MQFGVPLLVLCLALGSTEATISLKLVSRLYLPFDKLPVGGGAGGAGGAGGAGGGGGGGGGAGGRGGGGGGRGQTGGMYALNNGVAFKSAYDMDKQLAYVGGGQFVQIVDFSDVVQPKVVKQIATEGPVADIAECGDLVAFTQPGKPHFTDVGSLKIYEKYNPATMMMKELCSVEVGSQPIAVRFAQGCSLIIVANEGVMGENNYTKKYVNPEGTITTVRLAGSVSNGPSQQIVNTTFGAGGPMMTTPMAGFPRGTTWSPNAGAGGQGGQGQYPGQGGQGGQGGQGGQGQYPGQGGQGGQGGQGGQGGQGGYPGQGGQGGPGYYPGQGGQGGQGGQGGWGQGGGQGGQGGGNNPQYPMIPTTPLPGTICNGTSTMSYVVSQINFHKFNAPAEVQRLKALHVRQPYTGQLGDPGPHTFSRGLEPRHITLDQQEQIAYISLQENNAIAVVDLNNNTVIDILPMGVKNWKGLKIDASSADRGILFQTYDQLNSFPMPDAIETYYDAMGDLYVVTANEGAKPMMAQCSLEVCPGGPGEFEEVEIGEEFIVEELLPQPVIDSPLGQAMAEETQLGSSLFSMVDGINPAEPEFFNEVFMFGGRGISAYKVDPITMNMTLAWDSGDVIEKEIAKFFPKIFNGAAFSRPPQRVKPFMTKDSRSSGRGPECESLAVGDVQGRKLIFVGIDGVSALAIFSVAPGNSTPVYESLFKDGHIDASYNALYKNRKTGRVSGTVSMYEVIDVPYWMLLKTLGTNIEGSSAISMTSSAFSIFFAFLSGMFAIFMKM.

A signal peptide spans 1-15 (MQFGVPLLVLCLALG). N-linked (GlcNAc...) asparagine glycosylation is found at Asn203 and Asn234. The tract at residues 249 to 363 (AGFPRGTTWS…QYPMIPTTPL (115 aa)) is disordered. Over residues 262–351 (GAGGQGGQGQ…GGQGGQGGGN (90 aa)) the composition is skewed to gly residues. 3 N-linked (GlcNAc...) asparagine glycosylation sites follow: Asn369, Asn451, and Asn609.

As to expression, restricted to the primary mesenchyme cell lineage.

Its subcellular location is the cell membrane. Its function is as follows. Not known. Could be involved in mesenchyme cell migration, adhesion, fusion, or spicule formation. This Strongylocentrotus purpuratus (Purple sea urchin) protein is Mesenchyme-specific cell surface glycoprotein.